A 169-amino-acid polypeptide reads, in one-letter code: uncharacterized protein (169 aa).

A run of 3 helical transmembrane segments spans residues 25–45, 57–77, and 91–111; these read ALMG…MSYF, FFWV…FGVF, and LFLI…FLMV.

The protein belongs to the major facilitator superfamily. Allantoate permease family.

It localises to the membrane. This is an uncharacterized protein from Saccharomyces cerevisiae (strain ATCC 204508 / S288c) (Baker's yeast).